A 394-amino-acid polypeptide reads, in one-letter code: MAKEKFERTKPHVNIGTIGHVDHGKTTLTAAITTVLAKKGLSELRSFDSIDNAPEEKERGITINTSHVEYETANRHYAHVDCPGHADYVKNMVTGAAQMDGAIIVVAATDGPMPQTREHILLARQVNVPKLVVFMNKCDMVEDAEMLELVEMEMRELLSFYDFDGDNTPIIQGSALGALNGVEKWEDKVMELMEAVDTWIPLPPRDVDKPFLMPVEDVFSITGRGTVATGRIETGVIHVGDEIEILGLGEDKKSVVTGVEMFRKLLDQGEAGDNVGLLLRGVDKNEIKRGMVLCKPGQIKPHSKFKAEVYILKKEEGGRHTPFHNKYRPQFYLRTMDCTGEITLPEGTEMVMPGDNVTITVELIYPVALNIGLRFAIREGGRTVGAGQITEIID.

Residues 10–205 (KPHVNIGTIG…VDTWIPLPPR (196 aa)) enclose the tr-type G domain. A G1 region spans residues 19–26 (GHVDHGKT). Position 19–26 (19–26 (GHVDHGKT)) interacts with GTP. Thr26 provides a ligand contact to Mg(2+). The G2 stretch occupies residues 60-64 (GITIN). Residues 81 to 84 (DCPG) form a G3 region. GTP-binding positions include 81-85 (DCPGH) and 136-139 (NKCD). The tract at residues 136-139 (NKCD) is G4. Residues 174 to 176 (SAL) form a G5 region.

This sequence belongs to the TRAFAC class translation factor GTPase superfamily. Classic translation factor GTPase family. EF-Tu/EF-1A subfamily. As to quaternary structure, monomer.

It is found in the cytoplasm. The catalysed reaction is GTP + H2O = GDP + phosphate + H(+). GTP hydrolase that promotes the GTP-dependent binding of aminoacyl-tRNA to the A-site of ribosomes during protein biosynthesis. In Bacteroides fragilis (strain ATCC 25285 / DSM 2151 / CCUG 4856 / JCM 11019 / LMG 10263 / NCTC 9343 / Onslow / VPI 2553 / EN-2), this protein is Elongation factor Tu.